The primary structure comprises 335 residues: Ornithine carbamoyltransferase 2, catabolic (335 aa).

Carbamoyl phosphate contacts are provided by residues 62–65 (STRT), Q89, R113, and 140–143 (HPTQ). Residues N172, D236, and 240–241 (SM) each bind L-ornithine. Residues 277–278 (CL) and R322 each bind carbamoyl phosphate.

This sequence belongs to the aspartate/ornithine carbamoyltransferase superfamily. OTCase family.

It is found in the cytoplasm. The enzyme catalyses carbamoyl phosphate + L-ornithine = L-citrulline + phosphate + H(+). Its pathway is amino-acid degradation; L-arginine degradation via ADI pathway; carbamoyl phosphate from L-arginine: step 2/2. Its function is as follows. Reversibly catalyzes the transfer of the carbamoyl group from carbamoyl phosphate (CP) to the N(epsilon) atom of ornithine (ORN) to produce L-citrulline. This is Ornithine carbamoyltransferase 2, catabolic (arcB2) from Staphylococcus epidermidis (strain ATCC 12228 / FDA PCI 1200).